A 21-amino-acid polypeptide reads, in one-letter code: Tricyclic peptide MS-271 (21 aa).

A cross-link (3-cysteinyl-aspartic acid (Cys-Asp)) is located at residues 1–9 (CLGVGSCND). 2 cysteine pairs are disulfide-bonded: Cys1/Cys13 and Cys7/Cys19. Trp21 carries the D-tryptophan modification.

Functionally, inhibits chicken myosin light chain kinase with an IC(50) of 8 M. Does not inhibit bovine cAMP-dependent protein kinase or rat protein kinase C. Antibacterial activity against the Gram-positive bacteria B.subtilis, E.faecium and S.aureus. No antibacterial activity against the Gram-negative bacteria E.coli, K.pneumoniae, P.aeruginosa, P.vulgaris, S.sonnei and S.typhosa. No antifungal activity against C.albicans. The protein is Tricyclic peptide MS-271 of Streptomyces sp.